The following is a 127-amino-acid chain: Small ribosomal subunit protein uS11 (127 aa).

This sequence belongs to the universal ribosomal protein uS11 family. As to quaternary structure, part of the 30S ribosomal subunit. Interacts with proteins S7 and S18. Binds to IF-3.

Located on the platform of the 30S subunit, it bridges several disparate RNA helices of the 16S rRNA. Forms part of the Shine-Dalgarno cleft in the 70S ribosome. The chain is Small ribosomal subunit protein uS11 from Streptococcus thermophilus (strain CNRZ 1066).